The chain runs to 635 residues: Threonine--tRNA ligase (635 aa).

Residues 1–61 (MINISLSDGS…ENNCKLRILT (61 aa)) enclose the TGS domain. Residues 242–533 (DHRKLGRELD…LIEEYAGCFP (292 aa)) are catalytic. 3 residues coordinate Zn(2+): Cys-333, His-384, and His-510.

Belongs to the class-II aminoacyl-tRNA synthetase family. As to quaternary structure, homodimer. It depends on Zn(2+) as a cofactor.

The protein resides in the cytoplasm. It catalyses the reaction tRNA(Thr) + L-threonine + ATP = L-threonyl-tRNA(Thr) + AMP + diphosphate + H(+). Its function is as follows. Catalyzes the attachment of threonine to tRNA(Thr) in a two-step reaction: L-threonine is first activated by ATP to form Thr-AMP and then transferred to the acceptor end of tRNA(Thr). Also edits incorrectly charged L-seryl-tRNA(Thr). This is Threonine--tRNA ligase from Rickettsia canadensis (strain McKiel).